A 251-amino-acid polypeptide reads, in one-letter code: Ditrans,polycis-undecaprenyl-diphosphate synthase ((2E,6E)-farnesyl-diphosphate specific) (251 aa).

D20 is an active-site residue. Residue D20 participates in Mg(2+) binding. Substrate-binding positions include 21 to 24, W25, R33, H37, and 65 to 67; these read GNGR and SSE. N68 serves as the catalytic Proton acceptor. Substrate contacts are provided by residues W69, R71, R188, and 194-196; that span reads RIS. E207 contacts Mg(2+).

The protein belongs to the UPP synthase family. As to quaternary structure, homodimer. Mg(2+) is required as a cofactor.

The enzyme catalyses 8 isopentenyl diphosphate + (2E,6E)-farnesyl diphosphate = di-trans,octa-cis-undecaprenyl diphosphate + 8 diphosphate. In terms of biological role, catalyzes the sequential condensation of isopentenyl diphosphate (IPP) with (2E,6E)-farnesyl diphosphate (E,E-FPP) to yield (2Z,6Z,10Z,14Z,18Z,22Z,26Z,30Z,34E,38E)-undecaprenyl diphosphate (di-trans,octa-cis-UPP). UPP is the precursor of glycosyl carrier lipid in the biosynthesis of bacterial cell wall polysaccharide components such as peptidoglycan and lipopolysaccharide. The polypeptide is Ditrans,polycis-undecaprenyl-diphosphate synthase ((2E,6E)-farnesyl-diphosphate specific) (Vibrio parahaemolyticus serotype O3:K6 (strain RIMD 2210633)).